The sequence spans 337 residues: Large ribosomal subunit protein uL3 (337 aa).

Positions 1-32 are disordered; it reads MAKGHRPRRGSLAYSPRKRSQSHIPRFRSWPE.

This sequence belongs to the universal ribosomal protein uL3 family. In terms of assembly, part of the 50S ribosomal subunit. Forms a cluster with proteins L14 and L24e.

One of the primary rRNA binding proteins, it binds directly near the 3'-end of the 23S rRNA, where it nucleates assembly of the 50S subunit. The chain is Large ribosomal subunit protein uL3 from Methanococcoides burtonii (strain DSM 6242 / NBRC 107633 / OCM 468 / ACE-M).